A 123-amino-acid chain; its full sequence is MVNMRKVLALMQVFRERYDHKCDFNFCDIAVSIVCRSELDFINEPGLSNYAKRRRARRLGRCVRCFRVNPGFYFTKRCDGITCVPGISWNYDVEDYIKRGRVTGDRETPSTFHGYGYPVGHKT.

The tract at residues 52 to 55 (KRRR) is basic. A C4-type zinc finger spans residues 62 to 83 (CVRCFRVNPGFYFTKRCDGITC).

Belongs to the carlaviruses nucleic acid-binding protein family.

Suppressor of viral-induced RNA silencing. The potential mechanism of action is based on sequestering siRNAs. This Populus balsamifera (Balsam poplar) protein is RNA silencing suppressor.